The chain runs to 138 residues: Putative pre-16S rRNA nuclease (138 aa).

Belongs to the YqgF nuclease family.

The protein localises to the cytoplasm. Its function is as follows. Could be a nuclease involved in processing of the 5'-end of pre-16S rRNA. The sequence is that of Putative pre-16S rRNA nuclease from Caldicellulosiruptor bescii (strain ATCC BAA-1888 / DSM 6725 / KCTC 15123 / Z-1320) (Anaerocellum thermophilum).